The sequence spans 519 residues: MQLERILTETNIERSKFKQYKVLSKYINAVAKKYTLNNVSNKYGKVLFIKDGVVKVSGLSQIKIGEKVEFVGKNLFGMALNLEATSVGIVIFGEDTAIYEGVIVKRCEQNFAIKVDKTMLGRVVDVLGQPIDGLGELKDTKTTRVMSVERKAPGIVTRKSVHESMLTGVKMVDALLPIGRGQRELIIGDRQTGKSAIAVDAILNQQVNKDIVCIYVAVGQKKSTVRRLVEMLNTKGALEYTIVVVSTASDAAPLQFLAPYTGCTIGEYFRDEGKHALIVYDDLSKHAVAYRQMSLLLRRPPGREAYPGDVFYIHSRLLERAAKLNEKYGCGSLTAFPIVETQAGDVSAYIPTNIISITDGQIFLEKELFNKGIRPAVNVGLSVSRVGSAAQSAVMKKLAGALKLELAQYRELARFEQFSSNADAVTTQILKKGKLTIELLKQVNNNPMAVGMEALMIFAMSTSYFQNLDLSLVRAEEAKLLQYIHSVSSFKLYAACVDAVKAFNPKDTVFTEMCQSYVK.

188 to 195 contacts ATP; the sequence is GDRQTGKS.

Belongs to the ATPase alpha/beta chains family. As to quaternary structure, F-type ATPases have 2 components, CF(1) - the catalytic core - and CF(0) - the membrane proton channel. CF(1) has five subunits: alpha(3), beta(3), gamma(1), delta(1), epsilon(1). CF(0) has three main subunits: a, b and c.

It localises to the mitochondrion. The protein localises to the mitochondrion inner membrane. In terms of biological role, mitochondrial membrane ATP synthase (F(1)F(0) ATP synthase or Complex V) produces ATP from ADP in the presence of a proton gradient across the membrane which is generated by electron transport complexes of the respiratory chain. F-type ATPases consist of two structural domains, F(1) - containing the extramembraneous catalytic core, and F(0) - containing the membrane proton channel, linked together by a central stalk and a peripheral stalk. During catalysis, ATP synthesis in the catalytic domain of F(1) is coupled via a rotary mechanism of the central stalk subunits to proton translocation. Subunits alpha and beta form the catalytic core in F(1). Rotation of the central stalk against the surrounding alpha(3)beta(3) subunits leads to hydrolysis of ATP in three separate catalytic sites on the beta subunits. Subunit alpha does not bear the catalytic high-affinity ATP-binding sites. This is ATP synthase subunit alpha, mitochondrial (atp1) from Dictyostelium citrinum (Slime mold).